The sequence spans 287 residues: 4,4'-diapophytoene synthase (287 aa).

Residues 18–21 (HSKS), Y41, and R45 each bind (2E,6E)-farnesyl diphosphate. 2 residues coordinate Mg(2+): D48 and D52. Q165 lines the (2E,6E)-farnesyl diphosphate pocket. Position 168 (N168) interacts with Mg(2+). R171 is a binding site for (2E,6E)-farnesyl diphosphate. D172 serves as a coordination point for Mg(2+). Y248 contacts (2E,6E)-farnesyl diphosphate.

Belongs to the phytoene/squalene synthase family. CrtM subfamily. Mg(2+) is required as a cofactor.

It carries out the reaction 2 (2E,6E)-farnesyl diphosphate = 15-cis-4,4'-diapophytoene + 2 diphosphate. It functions in the pathway carotenoid biosynthesis; staphyloxanthin biosynthesis; staphyloxanthin from farnesyl diphosphate: step 1/5. In terms of biological role, involved in the biosynthesis of the yellow-orange carotenoid staphyloxanthin, which plays a role in the virulence via its protective function against oxidative stress. Catalyzes the head-to-head condensation of two molecules of farnesyl diphosphate (FPP) into the colorless C(30) carotenoid 4,4'-diapophytoene (dehydrosqualene). The chain is 4,4'-diapophytoene synthase from Staphylococcus aureus (strain NCTC 8325 / PS 47).